A 434-amino-acid chain; its full sequence is MSNRKSKNNIHAECLSQVQRILRERFCHHTPHSNLFGVQVQYKHLIELLKRTAIYGESNSLLIVGPRGSGKTTLLNHALKELMQIGDMSENVLQVHLNGLLQTNDKIALKEITRQLNLENVVGDKVFGSFAENLSFLLEALQKGNRTSSCPVIFILDEFDLFAHQKNQTLLYNLFDISQSAQTPIAVIGLTCRLDILELLEKRVKSRFSHRQIHLMNSFDFPQYLKIFKEQLSLPAEFPDKIFAEKWNENAHCLSEDSTVLEVLQKHFNVNKNLQSLHMLLMLALNRVTVTHPFMTSADLMEAQHLCSLDAKASIVHGLSVLEICLIIAMKHLNDIYEEEPFNFQMVYNEFQKFIQRKAHSVYNFEKPVVMKAFEHLQQLELIKPMERTSVNSQREYQLVKLLLDNTQIMNALQKYSNCPTDVRQWATSSLSWL.

K7 bears the N6-methyllysine mark. 65 to 72 contributes to the ATP binding site; the sequence is GPRGSGKT.

This sequence belongs to the ORC4 family. As to quaternary structure, component of ORC, a complex composed of at least 6 subunits: ORC1, ORC2, ORC3, ORC4, ORC5 and ORC6. ORC is regulated in a cell-cycle dependent manner. It is sequentially assembled at the exit from anaphase of mitosis and disassembled as cells enter S phase. Interacts with DBF4. Interacts with POLQ.

It localises to the nucleus. Its function is as follows. Component of the origin recognition complex (ORC) that binds origins of replication. DNA-binding is ATP-dependent. The specific DNA sequences that define origins of replication have not been identified yet. ORC is required to assemble the pre-replication complex necessary to initiate DNA replication. Binds histone H3 and H4 trimethylation marks H3K9me3, H3K27me3 and H4K20me3. This Rattus norvegicus (Rat) protein is Origin recognition complex subunit 4 (Orc4).